The chain runs to 58 residues: T-cell receptor gamma alternate reading frame protein (58 aa).

As to expression, detected at low levels in the ductal cells of the salivary gland but not in the acinar cells (at protein level). Expressed in endometrium (at protein level). Expressed in epithelial cells within the acinar ducts of the prostate.

This Homo sapiens (Human) protein is T-cell receptor gamma alternate reading frame protein.